A 756-amino-acid chain; its full sequence is Putative beta-xylosidase (756 aa).

A signal peptide spans 1-18 (MKKLLFTFLVSTGTIFFS). C19 carries N-palmitoyl cysteine lipidation. C19 is lipidated: S-diacylglycerol cysteine.

It belongs to the glycosyl hydrolase 3 family.

It is found in the cell outer membrane. Functionally, glycoside hydrolase probably involved in ulvan degradation. Ulvan is the main polysaccharide component of the Ulvales (green seaweed) cell wall. It is composed of disaccharide building blocks comprising 3-sulfated rhamnose (Rha3S) linked to D-glucuronic acid (GlcA), L-iduronic acid (IduA), or D-xylose (Xyl). The chain is Putative beta-xylosidase from Formosa agariphila (strain DSM 15362 / KCTC 12365 / LMG 23005 / KMM 3901 / M-2Alg 35-1).